A 512-amino-acid chain; its full sequence is Protein maph-9 (512 aa).

Disordered regions lie at residues 24 to 103 (ISRK…DDDF), 168 to 386 (DLSE…KNEK), and 481 to 512 (GNRL…RPFR). Composition is skewed to low complexity over residues 30–39 (TTTTSSGSSG) and 78–95 (STLS…STAA). Over residues 178 to 200 (TDHEDPSLTFRVDKELEQSESKK) the composition is skewed to basic and acidic residues. Over residues 230 to 239 (PQTSANLSTK) the composition is skewed to polar residues. Composition is skewed to basic and acidic residues over residues 260–302 (KPSD…RENS) and 310–386 (VQDH…KNEK). Residues 267–429 (KEWLQKKERE…QLEESEKMTR (163 aa)) are a coiled coil. Polar residues predominate over residues 502–512 (PGTTTSLRPFR).

In terms of tissue distribution, expressed in amphid and phasmid ciliated neurons.

It is found in the cell projection. The protein localises to the cilium. The protein resides in the cytoplasm. Its subcellular location is the cytoskeleton. It localises to the cilium axoneme. This is Protein maph-9 from Caenorhabditis elegans.